Consider the following 340-residue polypeptide: Entry-fusion complex protein OPG094 (340 aa).

Residues 1-20 are disordered; that stretch reads MGGGVSVELPKRDPPPGVPT. G2 carries N-myristoyl glycine; by host lipidation. The Virion surface segment spans residues 2–319; sequence GGGVSVELPK…VQHNIKHSFD (318 aa). The helical; Signal-anchor for type II membrane protein transmembrane segment at 320–340 threads the bilayer; the sequence is LKLHLISLLSLLVIWILIVAI.

The protein belongs to the orthopoxvirus OPG086 family. Interacts with OPG143. Component of the entry fusion complex (EFC) composed of OPG053, OPG076, OPG086, OPG094, OPG095, OPG099, OPG107, OPG143, OPG104, OPG147 and OPG155. Except for OPG095 and OPG053, each of the EFC proteins is required for assembly or stability of the complex. In terms of processing, unglycosylated because produced in viral factories instead of the classic ER -Golgi route.

It is found in the virion membrane. In terms of biological role, component of the entry fusion complex (EFC), which consists of 11 proteins. During cell infection, this complex mediates entry of the virion core into the host cytoplasm by a two-step mechanism consisting of lipid mixing of the viral and cellular membranes and subsequent pore formation. In Vaccinia virus (strain Copenhagen) (VACV), this protein is Entry-fusion complex protein OPG094 (OPG094).